The chain runs to 233 residues: Homeobox protein not2 (233 aa).

Residues 135–194 constitute a DNA-binding region (homeobox); sequence LKRIRTVFTPEQLERLEKEFLKQQYMVGTERVDLASTLNLTETQVKVWFQNRRIKWRKQS. The tract at residues 212 to 233 is disordered; it reads SSDHTDDSRETEEEEDDVDVEL. A compositionally biased stretch (acidic residues) spans 220 to 233; that stretch reads RETEEEEDDVDVEL.

Localized to the dorsal lip of the blastopore (Spemann organizer) during early gastrulation, after which expression continues in tissues derived from the organizer. Expressed in the notochord during mid-gastrulation, the chordoneural hinge, notochord and ventral spinal cord of the tailbud at stage 22, and finally the tip of the tail in the tadpole (stage 35).

It localises to the nucleus. Transcriptional repressor. Plays a fundamental role in notochord formation, acting within the mesodermal region. Acts downstream of gsc and upstream of chrd and foxa4-A/pintallavis. The chain is Homeobox protein not2 from Xenopus laevis (African clawed frog).